The sequence spans 327 residues: Inactive peptidyl-prolyl cis-trans isomerase FKBP6 (327 aa).

Residues 1 to 20 (MSVFSRLRNGIPPSRDDCQS) are disordered. In terms of domain architecture, PPIase FKBP-type spans 54 to 143 (DASVLVKYSG…LFEIELIDFL (90 aa)). TPR repeat units follow at residues 171-204 (AATE…LHRR), 219-252 (LLVL…DKRN), and 253-286 (AKAL…QPCN).

Belongs to the FKBP6 family. Interacts with HSP72/HSPA2 and CLTC. Interacts with GAPDH; leading to inhibit GAPDH catalytic activity. Interacts (via TPR repeats) with HSP90.

Its subcellular location is the cytoplasm. It localises to the cytosol. It is found in the nucleus. The protein localises to the chromosome. Co-chaperone required during spermatogenesis to repress transposable elements and prevent their mobilization, which is essential for the germline integrity. Acts via the piRNA metabolic process, which mediates the repression of transposable elements during meiosis by forming complexes composed of piRNAs and Piwi proteins and govern the methylation and subsequent repression of transposons. Acts as a co-chaperone via its interaction with HSP90 and is required for the piRNA amplification process, the secondary piRNA biogenesis. May be required together with HSP90 in removal of 16 nucleotide ping-pong by-products from Piwi complexes, possibly facilitating turnover of Piwi complexes. In Rattus norvegicus (Rat), this protein is Inactive peptidyl-prolyl cis-trans isomerase FKBP6 (Fkbp6).